The primary structure comprises 406 residues: MSAILQGAGAATALSPFNSIDSNKLVAPSRSSLSVRSKRYIVAGSDSKSFGSSLVARRSEPLIPNAVTTKADTAASSTSSKPGHELLLFEALQEGLEEEMDRDPHVCVMGEDVGHYGGSYKVTKGLADKFGDLRVLDTPICENAFTGMGIGAAMTGLRPVIEGMNMGFLLLAFNQISNNCGMLHYTSGGQFTIPVVIRGPGGVGRQLGAEHSQRLESYFQSIPGIQMVACSTPYNAKGLMKAAIRSENPVILFEHVLLYNLKESIPDEEYICNLEEAEMVRPGEHITILTYSRMRYHVMQAAKTLVNKGYDPEVIDIRSLKPFDLYTIGNSVKKTHRVLIVEECMRTGGIGASLTAAINENFHDYLDAPVMCLSSQDVPTPYAGTLEEWTVVQPAQIVTAVEQLCQ.

The transit peptide at 1 to 70 directs the protein to the chloroplast; it reads MSAILQGAGA…PLIPNAVTTK (70 aa). E142 contacts thiamine diphosphate. 4 residues coordinate K(+): V195, A243, I244, and N248.

As to quaternary structure, tetramer of 2 alpha and 2 beta subunits. The cofactor is thiamine diphosphate.

Its subcellular location is the plastid. It localises to the chloroplast. It catalyses the reaction N(6)-[(R)-lipoyl]-L-lysyl-[protein] + pyruvate + H(+) = N(6)-[(R)-S(8)-acetyldihydrolipoyl]-L-lysyl-[protein] + CO2. Functionally, the pyruvate dehydrogenase complex catalyzes the overall conversion of pyruvate to acetyl-CoA and CO(2). It contains multiple copies of three enzymatic components: pyruvate dehydrogenase (E1), dihydrolipoamide acetyltransferase (E2) and lipoamide dehydrogenase (E3). The sequence is that of Pyruvate dehydrogenase E1 component subunit beta-3, chloroplastic (E1-BETA-2) from Arabidopsis thaliana (Mouse-ear cress).